The chain runs to 4065 residues: Polyketide synthase-nonribosomal peptide synthetase pyiS (4065 aa).

Residues 6-440 (SEPVAIIGTG…GANCHAILEA (435 aa)) form the Ketosynthase family 3 (KS3) domain. Residues cysteine 179, histidine 314, and histidine 360 each act as for beta-ketoacyl synthase activity in the active site. An acyl transferase region spans residues 552-875 (IFTGQGAQWP…PYTGVLSRGK (324 aa)). Residues 950–1087 (NELLGRQILD…CDVLVTYGDS (138 aa)) are N-terminal hotdog fold. In terms of domain architecture, PKS/mFAS DH spans 950–1260 (NELLGRQILD…TQPLFNPTEA (311 aa)). Positions 951–1254 (ELLGRQILDG…QVEGLQTQPL (304 aa)) are dehydratase (DH) domain. The Proton acceptor; for dehydratase activity role is filled by histidine 982. The C-terminal hotdog fold stretch occupies residues 1102 to 1260 (EYFMLGVESD…TQPLFNPTEA (159 aa)). The Proton donor; for dehydratase activity role is filled by aspartate 1166. Residues 1409–1593 (AHGMPRYTKY…KQTGFSGIDT (185 aa)) are methyltransferase (MT) domain. The tract at residues 2129 to 2302 (TYWLVGLSGT…NASVVHIGAI (174 aa)) is ketoreductase (KR)domain. Residues 2411–2492 (INSAEVYEII…EILETAQQLL (82 aa)) enclose the Carrier 1 domain. Residue serine 2452 is modified to O-(pantetheine 4'-phosphoryl)serine. Residues 2497-2561 (LPKMDPNDKS…GAKKGETVSK (65 aa)) form a disordered region. Residues 2551–2561 (SGAKKGETVSK) show a composition bias toward basic and acidic residues. The segment at 2645–3076 (SKKTPISFAQ…FSRNQALRLA (432 aa)) is condensation. The adenylation stretch occupies residues 3112 to 3516 (DIAKQKSHSL…RLLLEGRIAD (405 aa)). In terms of domain architecture, Carrier 2 spans 3634–3714 (QDLNDTESRL…DMAALVDELS (81 aa)). Serine 3674 carries the post-translational modification O-(pantetheine 4'-phosphoryl)serine. The segment at 3760 to 3975 (LTGSTGFLGR…LDFISVDEAA (216 aa)) is reductase-like.

It belongs to the NRP synthetase family.

The protein operates within mycotoxin biosynthesis. Hybrid PKS-NRPS synthetase; part of the gene cluster that mediates the biosynthesis of the mycotoxin pyrichalasin H, a tyrosine-derived cytochalasan that inhibits the growth of rice seedlings, but also inhibits lymphocyte capping and actin polymerization and alters cell morphology. Pyrichalasin H is indicated as the responsible agent for the genus-specific pathogenicity of M.grisea toward crabgrass. The first step in the pathway is catalyzed by the O-methyltransferase pyiA which methylates free tyrosine to generate the precursor O-methyltyrosine. The hybrid PKS-NRPS pyiS, assisted by the enoyl reductase pyiC, are responsible for fusion of the O-methyltyrosine precursor and the polyketide backbone. The polyketide synthase module (PKS) of pyiS is responsible for the synthesis of the polyketide backbone and the downstream nonribosomal peptide synthetase (NRPS) amidates the carboxyl end of the polyketide with the O-methyltyrosine precursor. As the NRPS A-domain demonstrates substrate tolerance, pyiS can also use phenylalanine, tyrosine and even para-chlorophenylalanine as amino acid precursor, which leads to the production of novel cytochalasans, including halogenated cytochalasans. Because pyiS lacks a designated enoylreductase (ER) domain, the required activity is provided the enoyl reductase pyiC. Reduction by the hydrolyase pyiE leads to 1,5-dihydropyrrolone, which is substrate for dehydration and intra-molecular Diels-Alder cyclization by the Diels-Alderase pyiF to yield the required isoindolone-fused macrocycle. The tailoring cytochrome P450 monooxygenases piyD and piyG catalyze the hydroxylation at C-18 and C-7, respectivily, whereas the short-chain dehydrogenase/reductase pyiH reduces the carbonyl at C-21 in preparation for the transfer of an acetyl group by the acetyltransferase pyiB. These 3 reactions whose order is not clear yet, lead to the production of O-methylpyrichalasin J, a deacetylated pyrichalasin H. Finally, pyiB to converts O-methylpyrichalasin J into the final product pyrichalasin H via acetylation of C-21. The chain is Polyketide synthase-nonribosomal peptide synthetase pyiS from Pyricularia grisea (Crabgrass-specific blast fungus).